Here is a 282-residue protein sequence, read N- to C-terminus: Large ribosomal subunit protein uL2 (282 aa).

Disordered regions lie at residues 26 to 55 and 218 to 266; these read KKSPEKSLLESQSHTAGRNNYGRMTVRHRG and PHVR…HNKS. Over residues 34–43 the composition is skewed to polar residues; that stretch reads LESQSHTAGR. Over residues 254–266 the composition is skewed to basic residues; that stretch reads TIGKKTRNKHNKS.

The protein belongs to the universal ribosomal protein uL2 family. In terms of assembly, part of the 50S ribosomal subunit. Forms a bridge to the 30S subunit in the 70S ribosome.

One of the primary rRNA binding proteins. Required for association of the 30S and 50S subunits to form the 70S ribosome, for tRNA binding and peptide bond formation. It has been suggested to have peptidyltransferase activity; this is somewhat controversial. Makes several contacts with the 16S rRNA in the 70S ribosome. The protein is Large ribosomal subunit protein uL2 of Pediococcus pentosaceus (strain ATCC 25745 / CCUG 21536 / LMG 10740 / 183-1w).